Consider the following 407-residue polypeptide: Serine/threonine transporter SstT (407 aa).

The next 9 helical transmembrane spans lie at 10–30 (AKGNLIIQICAGIALGILIGI), 42–62 (LGILFTSALKAIAPMLVFILI), 81–101 (IIILYIVGTFLASACAILANF), 141–161 (ALSSGNYLGILTWAIAGGAAL), 179–199 (VLKIVKFVVKLAPFGIFGLVA), 218–238 (ILLVATMLFVTFVINALIVFF), 245–267 (FPLIFICLRHSAFFAFFTRSSAA), 288–308 (ISIPLGATINMAGAAVTIAIL), and 316–336 (VGIEISLLQAFLLSIIATFAA).

This sequence belongs to the dicarboxylate/amino acid:cation symporter (DAACS) (TC 2.A.23) family.

It is found in the cell inner membrane. The enzyme catalyses L-serine(in) + Na(+)(in) = L-serine(out) + Na(+)(out). It catalyses the reaction L-threonine(in) + Na(+)(in) = L-threonine(out) + Na(+)(out). In terms of biological role, involved in the import of serine and threonine into the cell, with the concomitant import of sodium (symport system). The chain is Serine/threonine transporter SstT from Campylobacter jejuni subsp. doylei (strain ATCC BAA-1458 / RM4099 / 269.97).